A 352-amino-acid polypeptide reads, in one-letter code: [LysW]-L-2-aminoadipate/[LysW]-L-glutamate phosphate reductase (352 aa).

S13 to T16 lines the NADP(+) pocket. C153 is an active-site residue. N319 serves as a coordination point for NADP(+).

The protein belongs to the NAGSA dehydrogenase family. Type 1 subfamily. LysY sub-subfamily.

It localises to the cytoplasm. The catalysed reaction is [amino-group carrier protein]-C-terminal-N-(1-carboxy-5-oxopentan-1-yl)-L-glutamine + phosphate + NADP(+) = [amino-group carrier protein]-C-terminal-N-(1-carboxy-5-phosphooxy-5-oxopentan-1-yl)-L-glutamine + NADPH + H(+). It carries out the reaction [amino-group carrier protein]-C-terminal-gamma-(L-glutamyl-5-semialdehyde)-L-glutamate + phosphate + NADP(+) = [amino-group carrier protein]-C-terminal-gamma-(5-phospho-L-glutamyl)-L-glutamate + NADPH + H(+). It functions in the pathway amino-acid biosynthesis; L-lysine biosynthesis via AAA pathway; L-lysine from L-alpha-aminoadipate (Thermus route): step 3/5. The protein operates within amino-acid biosynthesis; L-arginine biosynthesis. Its function is as follows. Involved in both the arginine and lysine biosynthetic pathways. In Saccharolobus solfataricus (strain ATCC 35092 / DSM 1617 / JCM 11322 / P2) (Sulfolobus solfataricus), this protein is [LysW]-L-2-aminoadipate/[LysW]-L-glutamate phosphate reductase.